The following is a 108-amino-acid chain: Large ribosomal subunit protein bL21c (108 aa).

Belongs to the bacterial ribosomal protein bL21 family. As to quaternary structure, part of the 50S ribosomal subunit.

It localises to the plastid. The protein localises to the chloroplast. Its function is as follows. This protein binds to 23S rRNA. This Cyanidium caldarium (Red alga) protein is Large ribosomal subunit protein bL21c.